Consider the following 1043-residue polypeptide: Integrator complex subunit 3 (1043 aa).

Met1 carries the post-translational modification N-acetylmethionine. A phosphoserine mark is found at Ser502, Ser537, and Ser995. The segment at 977 to 1043 is disordered; the sequence is YEDSSTKPPK…GSSAVGSDSD (67 aa). A compositionally biased stretch (acidic residues) spans 1008–1022; the sequence is AEEESGSSSASEEED.

This sequence belongs to the Integrator subunit 3 family. Component of the Integrator complex, composed of core subunits INTS1, INTS2, INTS3, INTS4, INTS5, INTS6, INTS7, INTS8, INTS9/RC74, INTS10, INTS11/CPSF3L, INTS12, INTS13, INTS14 and INTS15. The core complex associates with protein phosphatase 2A subunits PPP2CA and PPP2R1A, to form the Integrator-PP2A (INTAC) complex. Component of the SOSS complex, composed of SOSS-B (SOSS-B1/NABP2 or SOSS-B2/NABP1), SOSS-A/INTS3 and SOSS-C/INIP. SOSS complexes containing SOSS-B1/NABP2 are more abundant than complexes containing SOSS-B2/NABP1. Interacts with SOSS-B1/NABP2, SOSS-B2/NABP1 and SOSS-C/INIP; the interaction is direct. Interacts with NBN/NBS1.

It is found in the nucleus. The protein localises to the cytoplasm. Its function is as follows. Component of the integrator complex, a multiprotein complex that terminates RNA polymerase II (Pol II) transcription in the promoter-proximal region of genes. The integrator complex provides a quality checkpoint during transcription elongation by driving premature transcription termination of transcripts that are unfavorably configured for transcriptional elongation: the complex terminates transcription by (1) catalyzing dephosphorylation of the C-terminal domain (CTD) of Pol II subunit POLR2A/RPB1 and SUPT5H/SPT5, (2) degrading the exiting nascent RNA transcript via endonuclease activity and (3) promoting the release of Pol II from bound DNA. The integrator complex is also involved in terminating the synthesis of non-coding Pol II transcripts, such as enhancer RNAs (eRNAs), small nuclear RNAs (snRNAs), telomerase RNAs and long non-coding RNAs (lncRNAs). Within the integrator complex, INTS3 is involved in the post-termination step: INTS3 binds INTS7 in the open conformation of integrator complex and prevents the rebinding of Pol II to the integrator after termination cycle. Mediates recruitment of cytoplasmic dynein to the nuclear envelope, probably as component of the integrator complex. Functionally, component of the SOSS complex, a multiprotein complex that functions downstream of the MRN complex to promote DNA repair and G2/M checkpoint. The SOSS complex associates with single-stranded DNA at DNA lesions and influences diverse endpoints in the cellular DNA damage response including cell-cycle checkpoint activation, recombinational repair and maintenance of genomic stability. The SOSS complex is required for efficient homologous recombination-dependent repair of double-strand breaks (DSBs) and ATM-dependent signaling pathways. In the SOSS complex, it is required for the assembly of the complex and for stabilization of the complex at DNA damage sites. The chain is Integrator complex subunit 3 from Homo sapiens (Human).